The sequence spans 369 residues: GDSL esterase/lipase At5g41890 (369 aa).

Catalysis depends on S32, which acts as the Nucleophile. Catalysis depends on residues D334 and H337.

This sequence belongs to the 'GDSL' lipolytic enzyme family.

The polypeptide is GDSL esterase/lipase At5g41890 (Arabidopsis thaliana (Mouse-ear cress)).